We begin with the raw amino-acid sequence, 459 residues long: MKDFDTIAAISTVLGEGGISIIRISGDKSLAIVNKLFKAKNGKDILDMKPYTMKYGHIIEQDTKNILDEVLISYMKAPRSFTAEDTVEINCHGGVTPTKKIFQEVIKAGVRVAEPGEFTKRAFLNGRIDLTQAEAVIDIIRSKTELSMKSAVSQSIGKVSEEINVLRENLIETIAHIEATVDYPEEDLEEITSSQVQEKIEKIIEELERLLDTSEEGKIIREGLDVVIVGKPNVGKSSLLNALLSEKRAIVTEIPGTTRDVIEEYINLDGIPIKIIDTAGIRETEDLVEKIGVERSKEKINEADLVILVLDSSNKLNDEDYEIIEYIKDKKYITLLNKSDLESKINKSDLEDLKLYNIIEISAKMGFGLEDLKEYIKDLFFKGDIQTDSIIITNTRHKEALIRAKESCNTALKALENTLAIDLASIDIKNAWLSLGEITGDTLEEDIIDKIFSEFCLGK.

(6S)-5-formyl-5,6,7,8-tetrahydrofolate is bound by residues arginine 23, glutamate 88, and arginine 127. The TrmE-type G domain occupies 223-381 (GLDVVIVGKP…LKEYIKDLFF (159 aa)). Asparagine 233 is a binding site for K(+). GTP contacts are provided by residues 233–238 (NVGKSS), 252–258 (TEIPGTT), and 277–280 (DTAG). Residue serine 237 coordinates Mg(2+). K(+) is bound by residues threonine 252, isoleucine 254, and threonine 257. Threonine 258 provides a ligand contact to Mg(2+). Lysine 459 lines the (6S)-5-formyl-5,6,7,8-tetrahydrofolate pocket.

The protein belongs to the TRAFAC class TrmE-Era-EngA-EngB-Septin-like GTPase superfamily. TrmE GTPase family. As to quaternary structure, homodimer. Heterotetramer of two MnmE and two MnmG subunits. The cofactor is K(+).

It localises to the cytoplasm. Its function is as follows. Exhibits a very high intrinsic GTPase hydrolysis rate. Involved in the addition of a carboxymethylaminomethyl (cmnm) group at the wobble position (U34) of certain tRNAs, forming tRNA-cmnm(5)s(2)U34. The protein is tRNA modification GTPase MnmE of Clostridium tetani (strain Massachusetts / E88).